Here is a 596-residue protein sequence, read N- to C-terminus: MALIQTAFIWVAYAVAVGIVALIAAIFAYTYQTPRDRSALVSTITIITLTSLLATVLLLPVDIALVSSTTSSKLGAKKDWATPETVRNILLTLKIVYYALYSLDAVLCLLVIPFTYFFYEEYDEVDTEEGTQTLGQRLLGAAKYTLFFVVLVVILFLVGFFAPVARGGGSDMDLDYFKRLLAENHGERALTFALGLLISLGTLLYILYTSVGLALLPMSFIKSAPSISAPQLSETTASALEQNRERQRQLEGRNVGRNAGLSAKDQRELEALHREERTLVRRERLAAEARGEGKSFIVKAWTKTCAIFRPLKLVGGILLLLLSVIIWASMLITGIDKAKNSFCKQHCGYILGSINIFQPLNWVFVKSSIVFPIDYVLMALLVLFLFSSSVTGIAVIGLRFLWVRLFEIRKGHTSPQALLMATVMLTLIILAINYSIAMIIAPQYAIYGAQTFCTNPTRFPGDQPDCSNHPELIKTCSELSSGEGAEKVCTPTVVSTFLNRVTVNFPFFGALAFWAQFVFLAIFLIVFVTALFRTPKLDLSELDEDAEADEEEGLLATTGRRFGATWQDIRGKAKNQTPSRGAAGRGIRGDDDHDDD.

Helical transmembrane passes span 7–27 (AFIW…AAIF), 46–66 (IITL…IALV), 95–115 (IVYY…IPFT), 145–165 (TLFF…APVA), 196–216 (LLIS…LALL), 313–333 (LVGG…MLIT), 350–370 (ILGS…SSIV), 376–396 (VLMA…IAVI), 420–440 (MATV…AMII), and 507–527 (FFGA…LIVF). Positions 566–596 (WQDIRGKAKNQTPSRGAAGRGIRGDDDHDDD) are disordered. The span at 587–596 (IRGDDDHDDD) shows a compositional bias: basic and acidic residues.

This sequence belongs to the LIMR family. LMBRD1 subfamily.

The protein resides in the lysosome membrane. Probable lysosomal cobalamin transporter. Required to export cobalamin from lysosomes allowing its conversion to cofactors. This Sclerotinia sclerotiorum (strain ATCC 18683 / 1980 / Ss-1) (White mold) protein is Probable lysosomal cobalamin transporter.